Reading from the N-terminus, the 371-residue chain is 4-hydroxy-3-methylbut-2-en-1-yl diphosphate synthase (flavodoxin) (371 aa).

[4Fe-4S] cluster contacts are provided by Cys-270, Cys-273, Cys-305, and Glu-312.

This sequence belongs to the IspG family. Requires [4Fe-4S] cluster as cofactor.

The enzyme catalyses (2E)-4-hydroxy-3-methylbut-2-enyl diphosphate + oxidized [flavodoxin] + H2O + 2 H(+) = 2-C-methyl-D-erythritol 2,4-cyclic diphosphate + reduced [flavodoxin]. It participates in isoprenoid biosynthesis; isopentenyl diphosphate biosynthesis via DXP pathway; isopentenyl diphosphate from 1-deoxy-D-xylulose 5-phosphate: step 5/6. Functionally, converts 2C-methyl-D-erythritol 2,4-cyclodiphosphate (ME-2,4cPP) into 1-hydroxy-2-methyl-2-(E)-butenyl 4-diphosphate. This chain is 4-hydroxy-3-methylbut-2-en-1-yl diphosphate synthase (flavodoxin), found in Shewanella denitrificans (strain OS217 / ATCC BAA-1090 / DSM 15013).